The sequence spans 924 residues: Type II inositol 3,4-bisphosphate 4-phosphatase (924 aa).

Over residues 1–13 the composition is skewed to basic and acidic residues; it reads MEIKEEGASEEGQ. Disordered stretches follow at residues 1 to 25, 481 to 516, and 546 to 569; these read MEIK…SDPG, ILKK…HSDY, and DGGS…DAIP. The 143-residue stretch at 23–165 folds into the C2 domain; sequence DPGDCQFTSI…LKSKEQLLVL (143 aa).

The protein belongs to the inositol 3,4-bisphosphate 4-phosphatase family.

It carries out the reaction a 1,2-diacyl-sn-glycero-3-phospho-(1D-myo-inositol-3,4-bisphosphate) + H2O = a 1,2-diacyl-sn-glycero-3-phospho-(1D-myo-inositol-3-phosphate) + phosphate. The enzyme catalyses 1D-myo-inositol 1,3,4-trisphosphate + H2O = 1D-myo-inositol 1,3-bisphosphate + phosphate. The catalysed reaction is 1D-myo-inositol 3,4-bisphosphate + H2O = 1D-myo-inositol 3-phosphate + phosphate. It participates in signal transduction; phosphatidylinositol signaling pathway. With respect to regulation, strongly inhibited by inositol hexakisphosphate. Its function is as follows. Catalyzes the hydrolysis of the 4-position phosphate of phosphatidylinositol 3,4-bisphosphate, inositol 1,3,4-trisphosphate and inositol 3,4-bisphosphate. Plays a role in the late stages of macropinocytosis by dephosphorylating phosphatidylinositol 3,4-bisphosphate in membrane ruffles. Antagonizes the PI3K-AKT/PKB signaling pathway by dephosphorylating phosphoinositides and thereby modulating cell cycle progression and cell survival. This chain is Type II inositol 3,4-bisphosphate 4-phosphatase (INPP4B), found in Pongo abelii (Sumatran orangutan).